Reading from the N-terminus, the 690-residue chain is uncharacterized protein (690 aa).

This is an uncharacterized protein from Acanthamoeba polyphaga (Amoeba).